The primary structure comprises 326 residues: Vitamin B12 import system permease protein BtuC (326 aa).

The next 9 membrane-spanning stretches (helical) occupy residues 17–39, 59–81, 88–107, 111–133, 146–168, 188–205, 242–264, 274–296, and 303–322; these read LSLSLLVLLATLLSLCAGEQWIA, RTLAVLLVGAALALSGAVMQALF, PGLLGVSNGAGVGLIAAVLL, QLPGWALGLCAIAGALIITLILL, LLAGVALGIICSALMTWAIYFST, WQQSWLMIALIPVLIWIC, MVGVSVAMAGAIGFIGLVIPHIL, VLLPGCALAGAIALLLADVVARL, and LPIGVVTATLGAPVFIWLLL.

Belongs to the binding-protein-dependent transport system permease family. FecCD subfamily. As to quaternary structure, the complex is composed of two ATP-binding proteins (BtuD), two transmembrane proteins (BtuC) and a solute-binding protein (BtuF).

It is found in the cell inner membrane. Functionally, part of the ABC transporter complex BtuCDF involved in vitamin B12 import. Involved in the translocation of the substrate across the membrane. This is Vitamin B12 import system permease protein BtuC from Salmonella typhi.